The following is a 115-amino-acid chain: Probable non-functional T cell receptor beta variable 7-1 (115 aa).

Residues 1–21 (MGTRLLCWAAICLLGADHTGA) form the signal peptide. An Ig-like domain is found at 22–115 (GVSQSLRHKV…LAVYLCASSS (94 aa)).

In terms of assembly, most probably, the alpha-beta TR is not assembled due to incorrect folding of the beta chain. Alpha-beta TR is a heterodimer composed of an alpha and beta chain; disulfide-linked. The alpha-beta TR is associated with the transmembrane signaling CD3 coreceptor proteins to form the TR-CD3 (TcR or TCR). The assembly of alpha-beta TR heterodimers with CD3 occurs in the endoplasmic reticulum where a single alpha-beta TR heterodimer associates with one CD3D-CD3E heterodimer, one CD3G-CD3E heterodimer and one CD247 homodimer forming a stable octameric structure. CD3D-CD3E and CD3G-CD3E heterodimers preferentially associate with TR alpha and TR beta chains, respectively. The association of the CD247 homodimer is the last step of TcR assembly in the endoplasmic reticulum and is required for transport to the cell surface.

The protein localises to the cell membrane. Probable non-functional open reading frame (ORF) of V region of the variable domain of T cell receptor (TR) beta chain. Non-functional ORF generally cannot participate in the synthesis of a productive T cell receptor (TR) chain due to altered V-(D)-J or switch recombination and/or splicing site (at mRNA level) and/or conserved amino acid change (protein level). Alpha-beta T cell receptors are antigen specific receptors which are essential to the immune response and are present on the cell surface of T lymphocytes. Recognize peptide-major histocompatibility (MH) (pMH) complexes that are displayed by antigen presenting cells (APC), a prerequisite for efficient T cell adaptive immunity against pathogens. Binding of alpha-beta TR to pMH complex initiates TR-CD3 clustering on the cell surface and intracellular activation of LCK that phosphorylates the ITAM motifs of CD3G, CD3D, CD3E and CD247 enabling the recruitment of ZAP70. In turn ZAP70 phosphorylates LAT, which recruits numerous signaling molecules to form the LAT signalosome. The LAT signalosome propagates signal branching to three major signaling pathways, the calcium, the mitogen-activated protein kinase (MAPK) kinase and the nuclear factor NF-kappa-B (NF-kB) pathways, leading to the mobilization of transcription factors that are critical for gene expression and essential for T cell growth and differentiation. The T cell repertoire is generated in the thymus, by V-(D)-J rearrangement. This repertoire is then shaped by intrathymic selection events to generate a peripheral T cell pool of self-MH restricted, non-autoaggressive T cells. Post-thymic interaction of alpha-beta TR with the pMH complexes shapes TR structural and functional avidity. This is Probable non-functional T cell receptor beta variable 7-1 from Homo sapiens (Human).